Consider the following 345-residue polypeptide: Phenylalanine--tRNA ligase alpha subunit (345 aa).

Glutamate 255 serves as a coordination point for Mg(2+).

This sequence belongs to the class-II aminoacyl-tRNA synthetase family. Phe-tRNA synthetase alpha subunit type 1 subfamily. In terms of assembly, tetramer of two alpha and two beta subunits. Mg(2+) is required as a cofactor.

The protein localises to the cytoplasm. It catalyses the reaction tRNA(Phe) + L-phenylalanine + ATP = L-phenylalanyl-tRNA(Phe) + AMP + diphosphate + H(+). This chain is Phenylalanine--tRNA ligase alpha subunit, found in Lysinibacillus sphaericus (strain C3-41).